Reading from the N-terminus, the 336-residue chain is Heme A synthase (336 aa).

The next 8 membrane-spanning stretches (helical) occupy residues Leu12–Leu32, Leu97–Phe117, Ile130–Ile150, Ser161–Ile181, Leu194–Ser214, Phe256–Tyr276, Tyr285–Ile305, and Ile310–Ile330. His258 serves as a coordination point for heme. A heme-binding site is contributed by His316.

The protein belongs to the COX15/CtaA family. Type 2 subfamily. Interacts with CtaB. Requires heme b as cofactor.

The protein localises to the cell membrane. It catalyses the reaction Fe(II)-heme o + 2 A + H2O = Fe(II)-heme a + 2 AH2. It functions in the pathway porphyrin-containing compound metabolism; heme A biosynthesis; heme A from heme O: step 1/1. Its function is as follows. Catalyzes the conversion of heme O to heme A by two successive hydroxylations of the methyl group at C8. The first hydroxylation forms heme I, the second hydroxylation results in an unstable dihydroxymethyl group, which spontaneously dehydrates, resulting in the formyl group of heme A. This is Heme A synthase from Pelagibacter ubique (strain HTCC1062).